The sequence spans 131 residues: UPF0102 protein YraN (131 aa).

Positions 1 to 19 (MATVPTRSGSPRQLTTKQT) are enriched in polar residues. The disordered stretch occupies residues 1–20 (MATVPTRSGSPRQLTTKQTG).

This sequence belongs to the UPF0102 family.

This chain is UPF0102 protein YraN, found in Escherichia coli O17:K52:H18 (strain UMN026 / ExPEC).